A 505-amino-acid polypeptide reads, in one-letter code: MEAFVPGGAGAAAAAVGGFVAAAALAERAGVIAPRKRPNAPPAVPGLPIIGNLHQLKEKKPHQTFAKWAEIYGPIYTIRTGASSVVVLNSTEVAKEAMVAKFSSISTRKLSKALTVLTRDKSMVATSDYCDFHKMVKRYVMSSMLGTSAQKQFRDIRDMMIHNMLSTFHKLVKDDPHAPLIFRDVFKDELFRLSMIQSLGEDVSSVYVDEFGRDISKEEIYNATVTDMMMCAIEVDWRDFFPYLSWVPNKSFETRVFTTETRRTAVMRALIKQQKERIVRGEAKTCYLDFLLAENTLTDEQLMMLVWEALIEAADTTLVTTEWAMYELAKNPDKQERLYQEIREVCGDETVTEEHLPRLPYLNAVFHETLRRHSPVPLIPPRFVHEDTKLAGYDVPAGTEMVINLYGCNMNRKEWESPEEWVPERFAGGRLEVADMYKTMAFGAGRRACAGSLQATHIACAAVARFVQEFGWRLREGDEEKVDTVQLTAYKLHPLHVHLTRRGRM.

A helical membrane pass occupies residues 3 to 23 (AFVPGGAGAAAAAVGGFVAAA). Residue Cys-449 participates in heme binding.

The protein belongs to the cytochrome P450 family. Heme is required as a cofactor. Widely expressed.

The protein localises to the membrane. It carries out the reaction ent-kaur-16-ene + 3 reduced [NADPH--hemoprotein reductase] + 3 O2 = ent-kaur-16-en-19-oate + 3 oxidized [NADPH--hemoprotein reductase] + 4 H2O + 4 H(+). The protein operates within plant hormone biosynthesis; gibberellin biosynthesis. Catalyzes three successive oxidations of the 4-methyl group of ent-kaurene giving kaurenoic acid, a key step in gibberellins (GAs) biosynthesis. GAs, which are involved many processes, including stem elongation, play a central role in plant development. In Oryza sativa subsp. japonica (Rice), this protein is Ent-kaurene oxidase 2.